Consider the following 72-residue polypeptide: Guanine nucleotide-binding protein subunit gamma (72 aa).

A disordered region spans residues 32–72 (MVSVAPPKANPSVSSKTKQQQHFKPGKATKDKATTKCCTIS). Cys68 is lipidated: S-palmitoyl cysteine. Residue Cys69 is modified to Cysteine methyl ester. Cys69 is lipidated: S-farnesyl cysteine. Residues 70-72 (TIS) constitute a propeptide, removed in mature form.

Belongs to the G protein gamma family. G proteins are composed of 3 units, alpha, beta and gamma. Binding of the beta-gamma subunit complex (git5-git11) to the alpha subunit (gpa2) facilitates interaction with GPCR git3.

The protein resides in the cell membrane. Functionally, gamma subunit of the heterotrimeric guanine nucleotide-binding protein (G protein) involved in glucose-induced cAMP signaling. The beta-gamma subunits (git5-git11) promote binding of the alpha subunit gpa2 to GPCR git3, which senses extracellular glucose, to activate cAMP-PKA signaling and repress sexual development and gluconeogenesis. This is Guanine nucleotide-binding protein subunit gamma (git11) from Schizosaccharomyces pombe (strain 972 / ATCC 24843) (Fission yeast).